Reading from the N-terminus, the 294-residue chain is Nucleotide-binding protein Smal_0950 (294 aa).

16–23 (GLSGSGKS) provides a ligand contact to ATP. 69 to 72 (DVRG) contributes to the GTP binding site.

This sequence belongs to the RapZ-like family.

Displays ATPase and GTPase activities. The chain is Nucleotide-binding protein Smal_0950 from Stenotrophomonas maltophilia (strain R551-3).